Consider the following 496-residue polypeptide: Cobyric acid synthase (496 aa).

One can recognise a GATase cobBQ-type domain in the interval 264–458; sequence HTRIAVVAYP…LHGLFEDAAV (195 aa). The active-site Nucleophile is Cys345. Residue His450 is part of the active site.

Belongs to the CobB/CobQ family. CobQ subfamily.

It functions in the pathway cofactor biosynthesis; adenosylcobalamin biosynthesis. In terms of biological role, catalyzes amidations at positions B, D, E, and G on adenosylcobyrinic A,C-diamide. NH(2) groups are provided by glutamine, and one molecule of ATP is hydrogenolyzed for each amidation. This is Cobyric acid synthase from Acidovorax ebreus (strain TPSY) (Diaphorobacter sp. (strain TPSY)).